A 350-amino-acid polypeptide reads, in one-letter code: Protein SGT1 homolog A (350 aa).

TPR repeat units follow at residues 2 to 35 (AKEL…DPNC), 37 to 69 (EFFA…DPSL), and 71 to 103 (KAYL…TPSE). A CS domain is found at 149–238 (TAKYRHEYYQ…ADIITWASLE (90 aa)). The region spanning 260–350 (AYPSSKKVKD…DGMELKKWEI (91 aa)) is the SGS domain.

The protein belongs to the SGT1 family. In terms of assembly, interacts with RAR1. Forms a ternary complex with RAR1 and barley HSP90.

Functions in R gene-mediated resistance, but participates in a lower extent than SGT1B to RPP5-mediated resistance. Not required for RPM1, RPS2, RPS4 and RPS5-mediated resistance. Probably required for SCF-mediated ubiquitination, by coupling HSP90 to SCF complex for ubiquitination of HSP90 client proteins. The polypeptide is Protein SGT1 homolog A (SGT1A) (Arabidopsis thaliana (Mouse-ear cress)).